Consider the following 345-residue polypeptide: Class I histocompatibility antigen, F10 alpha chain (345 aa).

The signal sequence occupies residues Met-1–Pro-22. The tract at residues Glu-23–Gly-110 is alpha-1. Over Glu-23–Pro-301 the chain is Extracellular. Asn-59 and Asn-107 each carry an N-linked (GlcNAc...) asparagine glycan. Residues Gly-111–Arg-201 are alpha-2. Intrachain disulfides connect Cys-121-Cys-183 and Cys-221-Cys-277. Residues Glu-202 to Trp-292 form an alpha-3 region. Residues Pro-204 to Glu-293 form the Ig-like C1-type domain. The tract at residues Glu-293 to Pro-301 is connecting peptide. A helical transmembrane segment spans residues Ile-302–Tyr-324. The Cytoplasmic segment spans residues Arg-325–Ile-345.

It belongs to the MHC class I family. In terms of assembly, heterodimer of an alpha chain and a beta chain (beta-2-microglobulin).

The protein resides in the membrane. Its function is as follows. Involved in the presentation of foreign antigens to the immune system. The protein is Class I histocompatibility antigen, F10 alpha chain of Gallus gallus (Chicken).